A 308-amino-acid chain; its full sequence is Uridine diphosphate glucose pyrophosphatase NUDT22 (308 aa).

The substrate site is built by phenylalanine 56, tyrosine 86, arginine 138, alanine 143, aspartate 150, histidine 155, and glutamate 157. The Nudix hydrolase domain occupies 117-284 (ADPLGVGAAL…KGAILLYNRH (168 aa)). Positions 174–195 (GLLVVRELFSSVLQEICDEVNL) match the Nudix box motif. Mg(2+) is bound by residues glutamate 188 and glutamate 192. Substrate is bound at residue serine 273.

It belongs to the Nudix hydrolase family. The cofactor is Mg(2+).

It catalyses the reaction UDP-sugar + H2O = UMP + alpha-D-aldose 1-phosphate.. Hydrolyzes UDP-glucose to glucose 1-phosphate and UMP and UDP-galactose to galactose 1-phosphate and UMP. Preferred substrate is UDP-glucose. This chain is Uridine diphosphate glucose pyrophosphatase NUDT22 (Nudt22), found in Mus musculus (Mouse).